The sequence spans 584 residues: Probable pectinesterase/pectinesterase inhibitor (584 aa).

The first 22 residues, 1 to 22 (MAVGKIVISVASMLLVVGVAIG), serve as a signal peptide directing secretion. A pectinesterase inhibitor region spans residues 40–191 (NSHQKAVESL…KILSSNAIDI (152 aa)). Asn91 and Asn105 each carry an N-linked (GlcNAc...) asparagine glycan. A disordered region spans residues 246–267 (AQAGRPGAPADEGIGEGGGGGG). Residues 272–571 (THVVAKDGSG…TVANWLTPAN (300 aa)) form a pectinesterase region. Substrate is bound by residues Thr349 and Gln379. Asp402 (proton donor; for pectinesterase activity) is an active-site residue. The active-site Nucleophile; for pectinesterase activity is the Asp423. Substrate contacts are provided by Arg492 and Trp494.

It in the N-terminal section; belongs to the PMEI family. In the C-terminal section; belongs to the pectinesterase family. As to expression, pollen, and at much lower levels in pistils and petals.

It is found in the secreted. The protein localises to the cell wall. The enzyme catalyses [(1-&gt;4)-alpha-D-galacturonosyl methyl ester](n) + n H2O = [(1-&gt;4)-alpha-D-galacturonosyl](n) + n methanol + n H(+). The protein operates within glycan metabolism; pectin degradation; 2-dehydro-3-deoxy-D-gluconate from pectin: step 1/5. Functionally, acts in the modification of cell walls via demethylesterification of cell wall pectin. In Brassica napus (Rape), this protein is Probable pectinesterase/pectinesterase inhibitor (BP19).